Reading from the N-terminus, the 452-residue chain is 3-phosphoshikimate 1-carboxyvinyltransferase (452 aa).

Residues 1–17 show a composition bias toward low complexity; that stretch reads MSHAAAAKPATARKSQA. Residues 1–26 are disordered; that stretch reads MSHAAAAKPATARKSQALSGTARVPG. 3-phosphoshikimate is bound by residues K28, S29, and R33. Residue K28 participates in phosphoenolpyruvate binding. Positions 100 and 128 each coordinate phosphoenolpyruvate. 3-phosphoshikimate contacts are provided by S174, Q176, D327, and K354. A phosphoenolpyruvate-binding site is contributed by Q176. Catalysis depends on D327, which acts as the Proton acceptor. Residues R358 and R409 each contribute to the phosphoenolpyruvate site.

The protein belongs to the EPSP synthase family. In terms of assembly, monomer.

It is found in the cytoplasm. It catalyses the reaction 3-phosphoshikimate + phosphoenolpyruvate = 5-O-(1-carboxyvinyl)-3-phosphoshikimate + phosphate. Its pathway is metabolic intermediate biosynthesis; chorismate biosynthesis; chorismate from D-erythrose 4-phosphate and phosphoenolpyruvate: step 6/7. Its function is as follows. Catalyzes the transfer of the enolpyruvyl moiety of phosphoenolpyruvate (PEP) to the 5-hydroxyl of shikimate-3-phosphate (S3P) to produce enolpyruvyl shikimate-3-phosphate and inorganic phosphate. This Mesorhizobium japonicum (strain LMG 29417 / CECT 9101 / MAFF 303099) (Mesorhizobium loti (strain MAFF 303099)) protein is 3-phosphoshikimate 1-carboxyvinyltransferase.